Reading from the N-terminus, the 216-residue chain is Cytidylate kinase (216 aa).

10–18 (GPAAAGKST) is a binding site for ATP.

The protein belongs to the cytidylate kinase family. Type 1 subfamily.

It localises to the cytoplasm. The enzyme catalyses CMP + ATP = CDP + ADP. It carries out the reaction dCMP + ATP = dCDP + ADP. The chain is Cytidylate kinase from Macrococcus caseolyticus (strain JCSC5402) (Macrococcoides caseolyticum).